Reading from the N-terminus, the 339-residue chain is Glycerol-3-phosphate dehydrogenase [NAD(P)+] (339 aa).

NADPH is bound by residues Ser-15, Tyr-16, His-36, and Lys-110. The sn-glycerol 3-phosphate site is built by Lys-110, Gly-139, and Thr-141. Ala-143 is an NADPH binding site. Residues Lys-195, Asp-248, Ser-258, Arg-259, and Asn-260 each contribute to the sn-glycerol 3-phosphate site. The active-site Proton acceptor is Lys-195. Arg-259 serves as a coordination point for NADPH. 2 residues coordinate NADPH: Val-283 and Glu-285.

It belongs to the NAD-dependent glycerol-3-phosphate dehydrogenase family.

Its subcellular location is the cytoplasm. The enzyme catalyses sn-glycerol 3-phosphate + NAD(+) = dihydroxyacetone phosphate + NADH + H(+). It catalyses the reaction sn-glycerol 3-phosphate + NADP(+) = dihydroxyacetone phosphate + NADPH + H(+). Its pathway is membrane lipid metabolism; glycerophospholipid metabolism. Functionally, catalyzes the reduction of the glycolytic intermediate dihydroxyacetone phosphate (DHAP) to sn-glycerol 3-phosphate (G3P), the key precursor for phospholipid synthesis. In Klebsiella pneumoniae subsp. pneumoniae (strain ATCC 700721 / MGH 78578), this protein is Glycerol-3-phosphate dehydrogenase [NAD(P)+].